We begin with the raw amino-acid sequence, 334 residues long: Mitochondrial glycine transporter (334 aa).

3 Solcar repeats span residues 10–94 (SKSS…IRQA), 127–211 (LSNT…FKRR), and 234–318 (RAAA…LIMR). Helical transmembrane passes span 16–41 (FVAG…TRVQ), 69–95 (GTVP…RQAA), 133–158 (LLAG…VRYE), 186–209 (GFGA…EQFK), 238–264 (VNFS…KTRI), and 293–311 (GLGL…AWTL).

It belongs to the mitochondrial carrier (TC 2.A.29) family. SLC25A38 subfamily.

It localises to the mitochondrion inner membrane. It catalyses the reaction glycine(in) = glycine(out). In terms of biological role, mitochondrial glycine transporter that imports glycine into the mitochondrial matrix. Plays an important role in providing glycine for the first enzymatic step in heme biosynthesis, the condensation of glycine with succinyl-CoA to produce 5-aminolevulinate (ALA) in the mitochondrial matrix. In Pyricularia oryzae (strain 70-15 / ATCC MYA-4617 / FGSC 8958) (Rice blast fungus), this protein is Mitochondrial glycine transporter.